The sequence spans 122 residues: Large ribosomal subunit protein uL14 (122 aa).

Belongs to the universal ribosomal protein uL14 family. Part of the 50S ribosomal subunit. Forms a cluster with proteins L3 and L19. In the 70S ribosome, L14 and L19 interact and together make contacts with the 16S rRNA in bridges B5 and B8.

Functionally, binds to 23S rRNA. Forms part of two intersubunit bridges in the 70S ribosome. The polypeptide is Large ribosomal subunit protein uL14 (Mycoplasma mobile (strain ATCC 43663 / 163K / NCTC 11711) (Mesomycoplasma mobile)).